The sequence spans 810 residues: Lon protease (810 aa).

The Lon N-terminal domain maps to 8–201 (LPLLPLRGIL…KLCGIVAKEL (194 aa)). 353-360 (GPPGVGKT) is a binding site for ATP. A Lon proteolytic domain is found at 589–770 (NDEVGTVTGM…DQVLAIALLE (182 aa)). Residues Ser676 and Lys719 contribute to the active site.

This sequence belongs to the peptidase S16 family. In terms of assembly, homohexamer. Organized in a ring with a central cavity.

It is found in the cytoplasm. The catalysed reaction is Hydrolysis of proteins in presence of ATP.. Functionally, ATP-dependent serine protease that mediates the selective degradation of mutant and abnormal proteins as well as certain short-lived regulatory proteins. Required for cellular homeostasis and for survival from DNA damage and developmental changes induced by stress. Degrades polypeptides processively to yield small peptide fragments that are 5 to 10 amino acids long. Binds to DNA in a double-stranded, site-specific manner. This Desulforamulus reducens (strain ATCC BAA-1160 / DSM 100696 / MI-1) (Desulfotomaculum reducens) protein is Lon protease.